Consider the following 118-residue polypeptide: Large ribosomal subunit protein uL18 (118 aa).

This sequence belongs to the universal ribosomal protein uL18 family. In terms of assembly, part of the 50S ribosomal subunit; part of the 5S rRNA/L5/L18/L25 subcomplex. Contacts the 5S and 23S rRNAs.

Functionally, this is one of the proteins that bind and probably mediate the attachment of the 5S RNA into the large ribosomal subunit, where it forms part of the central protuberance. This Ralstonia pickettii (strain 12J) protein is Large ribosomal subunit protein uL18.